The sequence spans 250 residues: Tripartite motif-containing protein 74 (250 aa).

An RING-type zinc finger spans residues cysteine 16–tryptophan 57. A B box-type zinc finger spans residues proline 84 to valine 125. Residues cysteine 89, histidine 92, cysteine 111, and histidine 117 each contribute to the Zn(2+) site. Coiled-coil stretches lie at residues valine 125–aspartate 169 and leucine 204–glutamate 235.

Belongs to the TRIM/RBCC family.

This is Tripartite motif-containing protein 74 (TRIM74) from Homo sapiens (Human).